Reading from the N-terminus, the 205-residue chain is Urease accessory protein UreG 1 (205 aa).

Glycine 14–threonine 21 provides a ligand contact to GTP.

The protein belongs to the SIMIBI class G3E GTPase family. UreG subfamily. Homodimer. UreD, UreF and UreG form a complex that acts as a GTP-hydrolysis-dependent molecular chaperone, activating the urease apoprotein by helping to assemble the nickel containing metallocenter of UreC. The UreE protein probably delivers the nickel.

It localises to the cytoplasm. Its function is as follows. Facilitates the functional incorporation of the urease nickel metallocenter. This process requires GTP hydrolysis, probably effectuated by UreG. The polypeptide is Urease accessory protein UreG 1 (Methylobacterium radiotolerans (strain ATCC 27329 / DSM 1819 / JCM 2831 / NBRC 15690 / NCIMB 10815 / 0-1)).